The sequence spans 170 residues: Helix-loop-helix protein 3 (170 aa).

Positions methionine 1 to glutamine 26 are enriched in low complexity. Disordered stretches follow at residues methionine 1–valine 42 and threonine 118–tyrosine 170. Residues glutamine 26 to valine 39 are basic motif; degenerate. The bHLH domain maps to glutamine 26 to leucine 79. Residues lysine 30 to aspartate 40 are compositionally biased toward basic and acidic residues. Positions aspartate 40–leucine 79 are helix-loop-helix motif. Residues serine 143–serine 157 are compositionally biased toward low complexity.

Efficient DNA binding requires dimerization with another bHLH protein. Forms a heterodimer with hlh-2. Expressed in the ADL sensory neurons.

It is found in the nucleus. Probable transcriptional regulator. May mediate transcriptional activation by binding to the E-box motif 5'-CANNTG-3'. Plays a role in the differentiation of the hermaphrodite-specific motor neurons (HSN) that are required for normal egg laying. Might play a role in serotonin production by regulating expression of the tryptophan hydrolase tph-1 which catalyzes serotonin synthesis, in the HSN neurons. Also plays a role in HSN axon guidance towards the vulva and the ventral nerve cord, possibly by promoting the expression of the netrin receptor unc-40. Under feeding conditions, involved in the regulation of the srh-234 chemoreceptor encoding gene expression in the ADL sensory neurons. Together with hlh-2, involved in the induction of programmed cell death in the sister cells of the serotonergic neurosecretory motor (NSM) neurons, probably through the activation of egl-1 transcription. This Caenorhabditis elegans protein is Helix-loop-helix protein 3.